Consider the following 1818-residue polypeptide: Unconventional myosin-Vb (1818 aa).

In terms of domain architecture, Myosin N-terminal SH3-like spans 8–60 (TRYTRVWIPDPDEVWRSAELTKDYKEGDKSLQLRLEDDTILEYPVDVQNNQVP). Positions 21 to 40 (VWRSAELTKDYKEGDKSLQL) are requires for interaction with LIMA1. Positions 69 to 762 (VGENDLTALS…QVAYLEKLRA (694 aa)) constitute a Myosin motor domain. 163–170 (GESGAGKT) is a binding site for ATP. Residues 641 to 663 (LNLLMETLNATTPHYVRCIKPND) form an actin-binding region. IQ domains are found at residues 765-794 (FREATIMIQKSVRGWLQRVKYRRLRAATLS), 788-817 (LRAATLSLQRFCRGYLARRLAEHLRRTRAA), 813-842 (RTRAAIVFQKQYRMLKARRAYRRVCRATVI), 836-865 (VCRATVIIQSFTRAMFVRRNYRQVLMEHKA), 861-890 (MEHKATIIQKYARGWMARKRFLRERDAAIV), and 884-913 (ERDAAIVIQCAFRRLKARQELKALKIEARS). Disordered regions lie at residues 1086 to 1120 (LRDEQTPGHRKNPSNQSSLESDSNYPSISTSEIGD) and 1161 to 1188 (QAQLEKGQQDSKKGQVEQQNNGLDVDQD). Residues 1098-1118 (PSNQSSLESDSNYPSISTSEI) show a composition bias toward polar residues. Coiled coils occupy residues 1140-1261 (MTVF…LILR) and 1313-1415 (LEAQ…ALAQ). At Ser1416 the chain carries Phosphoserine. One can recognise a Dilute domain in the interval 1496-1773 (SSTINGIKKV…IRTIQAQLQE (278 aa)).

This sequence belongs to the TRAFAC class myosin-kinesin ATPase superfamily. Myosin family. Component of the CART complex, at least composed of ACTN4, HGS/HRS, MYO5B and TRIM3. Interacts with RAB11FIP2. Interacts with RAB11A and RAB8A. Found in a complex with CFTR and RAB11A. Interacts with NPC1L1. Interacts with LIMA1.

It localises to the cytoplasm. Its function is as follows. May be involved in vesicular trafficking via its association with the CART complex. The CART complex is necessary for efficient transferrin receptor recycling but not for EGFR degradation. Required in a complex with RAB11A and RAB11FIP2 for the transport of NPC1L1 to the plasma membrane. Together with RAB11A participates in CFTR trafficking to the plasma membrane and TF (transferrin) recycling in nonpolarized cells. Together with RAB11A and RAB8A participates in epithelial cell polarization. Together with RAB25 regulates transcytosis. Required for proper localization of bile salt export pump ABCB11 at the apical/canalicular plasma membrane of hepatocytes. The polypeptide is Unconventional myosin-Vb (Myo5b) (Mus musculus (Mouse)).